Reading from the N-terminus, the 154-residue chain is MGNKNAIYILRFLIYFFIFYYILKMLEGNIMDLLTITLSKLLNLKFYKNEIIVGKNIIEISSPCTCSLEMALFLGYIFGTPDVPIKYKISYSVFGLSIITISNILRIILIINYSNMINYNVVHDVISFIIFPIALFLNWFWIYLLKMKKIIMFK.

The next 4 membrane-spanning stretches (helical) occupy residues 6–26 (AIYILRFLIYFFIFYYILKML), 57–77 (IIEISSPCTCSLEMALFLGYI), 91–111 (YSVFGLSIITISNILRIILII), and 125–145 (VISFIIFPIALFLNWFWIYLL). The Acyl-thioester intermediate role is filled by cysteine 64. Catalysis depends on arginine 106, which acts as the Proton donor.

The protein belongs to the exosortase/archaeosortase family. Archaeosortase D subfamily.

The protein resides in the cell membrane. Transpeptidase that recognizes and modifies its substrate by proteolytic cleavage of a sorting signal. Following cleavage, a covalent intermediate is formed via a thioester bond between the archaeosortase and its substrate, which is then transferred and covalently attached to the cell membrane. This chain is Probable archaeosortase D, found in Methanocaldococcus jannaschii (strain ATCC 43067 / DSM 2661 / JAL-1 / JCM 10045 / NBRC 100440) (Methanococcus jannaschii).